The sequence spans 593 residues: PiggyBac transposable element-derived protein 3 (593 aa).

2 disordered regions span residues 27 to 53 (IQPP…INNL) and 69 to 105 (SDAE…SRRR). The segment covering 38-47 (SDEESGDEEG) has biased composition (acidic residues). Ser86 is subject to Phosphoserine.

As to expression, expressed in heart and oocytes, but not in granulosa cells (at protein level).

Its subcellular location is the nucleus. Functionally, binds in vitro to PGBD3-related transposable elements, called MER85s; these non-autonomous 140 bp elements are characterized by the presence of PGBD3 terminal inverted repeats and the absence of internal transposase ORF. This is PiggyBac transposable element-derived protein 3 (PGBD3) from Homo sapiens (Human).